Consider the following 250-residue polypeptide: MTRETLKTLQSTFGEMVASFVFGFAVYSALLGSALTEQSAARVIVGLTVGFSGICVIYSFCDVTVAHFNPAITLAAILTCKLGVLRGIGYIVAQYIGFILAVCALLPCSPVGYKETLNIIRPTPSPFGGDNLNVFFTEFFLTAILVHVAFATAVNPYKPKTDTEGKFVDPDEEEPVDRRITAPLCIGLTLGFLAFLGLASSGGAFNPGLTLAPVIMSNTWNHFWAYFAGQYLGGFVGGLLQVLVLYKLSF.

At 1–15 the chain is on the cytoplasmic side; the sequence is MTRETLKTLQSTFGE. The chain crosses the membrane as a helical span at residues 16-36; that stretch reads MVASFVFGFAVYSALLGSALT. The Extracellular segment spans residues 37-42; the sequence is EQSAAR. Residues 43–63 form a helical membrane-spanning segment; it reads VIVGLTVGFSGICVIYSFCDV. Topologically, residues 64–86 are cytoplasmic; it reads TVAHFNPAITLAAILTCKLGVLR. An NPA motif is present at residues 69 to 71; that stretch reads NPA. Residues 87-107 form a helical membrane-spanning segment; it reads GIGYIVAQYIGFILAVCALLP. Topologically, residues 108–133 are extracellular; that stretch reads CSPVGYKETLNIIRPTPSPFGGDNLN. Residues 134 to 154 traverse the membrane as a helical segment; it reads VFFTEFFLTAILVHVAFATAV. Over 155 to 179 the chain is Cytoplasmic; the sequence is NPYKPKTDTEGKFVDPDEEEPVDRR. The chain crosses the membrane as a helical span at residues 180-200; that stretch reads ITAPLCIGLTLGFLAFLGLAS. At 201–224 the chain is on the extracellular side; sequence SGGAFNPGLTLAPVIMSNTWNHFW. An NPG motif is present at residues 206–208; the sequence is NPG. Residues 225–245 traverse the membrane as a helical segment; the sequence is AYFAGQYLGGFVGGLLQVLVL. The Cytoplasmic segment spans residues 246-250; sequence YKLSF.

Belongs to the MIP/aquaporin (TC 1.A.8) family.

It localises to the cell membrane. In terms of biological role, water channel required to facilitate the transport of water across membranes. Involved in osmotolerance. The chain is Aquaporin (AQP) from Encephalitozoon cuniculi (strain GB-M1) (Microsporidian parasite).